A 308-amino-acid polypeptide reads, in one-letter code: Vomeronasal type-1 receptor 92 (308 aa).

The Extracellular portion of the chain corresponds to 1 to 18; that stretch reads MNKDNTLHTIMKITMFSE. The helical transmembrane segment at 19–39 threads the bilayer; sequence VSVGISANSILFFAHLCMLLG. Over 40-48 the chain is Cytoplasmic; sequence ENRPKPFHL. A helical membrane pass occupies residues 49–69; the sequence is YIVSLSLTQLILLITMGLIAV. Residues 70–91 are Extracellular-facing; the sequence is DMFMSWGRWDSTPCQSLIYLHR. A disulfide bridge links Cys83 with Cys170. A helical transmembrane segment spans residues 92-112; sequence LLRGFTLCAACLLNVFWMITL. The Cytoplasmic portion of the chain corresponds to 113–132; the sequence is SPRSSCLSKFKHNSPHHISG. A helical membrane pass occupies residues 133 to 153; sequence AFLFLCVLYMSFSSHLLVSII. Residues 154–188 lie on the Extracellular side of the membrane; sequence ATPNLTSNIFMYVTQSCSLLPMSYSRTSTFSTTIA. Asn157 carries an N-linked (GlcNAc...) asparagine glycan. A helical membrane pass occupies residues 189–209; it reads IREAFLISLMALSSGFMVTLL. Residues 210–236 are Cytoplasmic-facing; it reads WRHKKQAQHLHSTSLSSKASPERRATR. The chain crosses the membrane as a helical span at residues 237–257; that stretch reads TILLLMSFFVVLYILENVVFY. Topologically, residues 258-267 are extracellular; the sequence is SRMKFKDGSM. Residues 268–288 form a helical membrane-spanning segment; it reads FYCVQIIVSHSYATISPFVFI. Topologically, residues 289-308 are cytoplasmic; it reads CTEKHMTKILRSVCTRIINI.

The protein belongs to the G-protein coupled receptor 1 family.

It localises to the cell membrane. Putative pheromone receptor implicated in the regulation of social as well as reproductive behavior. In Rattus norvegicus (Rat), this protein is Vomeronasal type-1 receptor 92 (Vom1r92).